The following is a 470-amino-acid chain: Ribulose bisphosphate carboxylase large chain (470 aa).

The substrate site is built by asparagine 118 and threonine 168. Lysine 170 functions as the Proton acceptor in the catalytic mechanism. Substrate is bound at residue lysine 172. The Mg(2+) site is built by lysine 196, aspartate 198, and glutamate 199. Residue lysine 196 is modified to N6-carboxylysine. Catalysis depends on histidine 289, which acts as the Proton acceptor. Substrate-binding residues include arginine 290, histidine 322, and serine 374.

This sequence belongs to the RuBisCO large chain family. Type I subfamily. In terms of assembly, heterohexadecamer of 8 large chains and 8 small chains; disulfide-linked. The disulfide link is formed within the large subunit homodimers. RuBisCO interacts with the C-terminus of CcmM, and can be found in complexes that also include carbonic anhydrase (ccaA). RuBisCO associates with both the internal and shell portion of carboxysomes. The cofactor is Mg(2+). The disulfide bond which can form in the large chain dimeric partners within the hexadecamer appears to be associated with oxidative stress and protein turnover.

The protein localises to the carboxysome. It carries out the reaction 2 (2R)-3-phosphoglycerate + 2 H(+) = D-ribulose 1,5-bisphosphate + CO2 + H2O. The enzyme catalyses D-ribulose 1,5-bisphosphate + O2 = 2-phosphoglycolate + (2R)-3-phosphoglycerate + 2 H(+). Its function is as follows. RuBisCO catalyzes two reactions: the carboxylation of D-ribulose 1,5-bisphosphate, the primary event in carbon dioxide fixation, as well as the oxidative fragmentation of the pentose substrate in the photorespiration process. Both reactions occur simultaneously and in competition at the same active site. The sequence is that of Ribulose bisphosphate carboxylase large chain from Synechocystis sp. (strain ATCC 27184 / PCC 6803 / Kazusa).